The chain runs to 334 residues: Glyceraldehyde-3-phosphate dehydrogenase (334 aa).

NAD(+) is bound by residues 12-13 (RI), aspartate 37, arginine 81, and serine 123. Residues 153–155 (SCT) and threonine 184 contribute to the D-glyceraldehyde 3-phosphate site. Cysteine 154 (nucleophile) is an active-site residue. Position 185 (asparagine 185) interacts with NAD(+). D-glyceraldehyde 3-phosphate contacts are provided by residues arginine 199, 212-213 (TG), and arginine 235. An NAD(+)-binding site is contributed by asparagine 314.

It belongs to the glyceraldehyde-3-phosphate dehydrogenase family. Homotetramer.

The protein localises to the cytoplasm. It carries out the reaction D-glyceraldehyde 3-phosphate + phosphate + NAD(+) = (2R)-3-phospho-glyceroyl phosphate + NADH + H(+). Its pathway is carbohydrate degradation; glycolysis; pyruvate from D-glyceraldehyde 3-phosphate: step 1/5. Functionally, catalyzes the oxidative phosphorylation of glyceraldehyde 3-phosphate (G3P) to 1,3-bisphosphoglycerate (BPG) using the cofactor NAD. The first reaction step involves the formation of a hemiacetal intermediate between G3P and a cysteine residue, and this hemiacetal intermediate is then oxidized to a thioester, with concomitant reduction of NAD to NADH. The reduced NADH is then exchanged with the second NAD, and the thioester is attacked by a nucleophilic inorganic phosphate to produce BPG. In Pseudomonas aeruginosa (strain ATCC 15692 / DSM 22644 / CIP 104116 / JCM 14847 / LMG 12228 / 1C / PRS 101 / PAO1), this protein is Glyceraldehyde-3-phosphate dehydrogenase (gap).